The chain runs to 464 residues: Pup--protein ligase (464 aa).

Glutamate 14 provides a ligand contact to Mg(2+). Arginine 58 lines the ATP pocket. Tyrosine 60 provides a ligand contact to Mg(2+). Aspartate 62 acts as the Proton acceptor in catalysis. Glutamate 68 is a Mg(2+) binding site. ATP is bound by residues threonine 71 and tryptophan 430.

Belongs to the Pup ligase/Pup deamidase family. Pup-conjugating enzyme subfamily.

The enzyme catalyses ATP + [prokaryotic ubiquitin-like protein]-L-glutamate + [protein]-L-lysine = ADP + phosphate + N(6)-([prokaryotic ubiquitin-like protein]-gamma-L-glutamyl)-[protein]-L-lysine.. Its pathway is protein degradation; proteasomal Pup-dependent pathway. The protein operates within protein modification; protein pupylation. Its function is as follows. Catalyzes the covalent attachment of the prokaryotic ubiquitin-like protein modifier Pup to the proteasomal substrate proteins, thereby targeting them for proteasomal degradation. This tagging system is termed pupylation. The ligation reaction involves the side-chain carboxylate of the C-terminal glutamate of Pup and the side-chain amino group of a substrate lysine. This chain is Pup--protein ligase, found in Micrococcus luteus (strain ATCC 4698 / DSM 20030 / JCM 1464 / CCM 169 / CCUG 5858 / IAM 1056 / NBRC 3333 / NCIMB 9278 / NCTC 2665 / VKM Ac-2230) (Micrococcus lysodeikticus).